A 734-amino-acid polypeptide reads, in one-letter code: Ribosome-releasing factor 2, mitochondrial (734 aa).

The N-terminal 25 residues, 1-25, are a transit peptide targeting the mitochondrion; it reads MLQYCLLRRYRFLLRQHAQVIKRCY. The tr-type G domain maps to 27 to 303; that stretch reads GDIRNIGILA…AVNAYLPMPE (277 aa). GTP contacts are provided by residues 36–43, 100–104, and 154–157; these read AHIDAGKT, DTPGH, and NKMD.

The protein belongs to the TRAFAC class translation factor GTPase superfamily. Classic translation factor GTPase family. EF-G/EF-2 subfamily.

It is found in the mitochondrion. Mitochondrial GTPase that mediates the disassembly of ribosomes from messenger RNA at the termination of mitochondrial protein biosynthesis. Not involved in the GTP-dependent ribosomal translocation step during translation elongation. This is Ribosome-releasing factor 2, mitochondrial from Drosophila grimshawi (Hawaiian fruit fly).